A 197-amino-acid chain; its full sequence is Probable GTP-binding protein EngB (197 aa).

The EngB-type G domain maps to 25-197 (SAPEIAFAGR…VRDEFFKFTR (173 aa)). GTP-binding positions include 33–40 (GRSNVGKS), 60–64 (GCTRQ), 79–82 (DLPG), 146–149 (TKID), and 177–179 (ISI). Ser-40 and Thr-62 together coordinate Mg(2+).

Belongs to the TRAFAC class TrmE-Era-EngA-EngB-Septin-like GTPase superfamily. EngB GTPase family. Mg(2+) is required as a cofactor.

Its function is as follows. Necessary for normal cell division and for the maintenance of normal septation. The polypeptide is Probable GTP-binding protein EngB (Wolbachia pipientis subsp. Culex pipiens (strain wPip)).